We begin with the raw amino-acid sequence, 356 residues long: Guanine nucleotide-binding protein alpha-17 subunit (356 aa).

A lipid anchor (N-myristoyl glycine) is attached at Gly2. A lipid anchor (S-palmitoyl cysteine) is attached at Cys4. A G-alpha domain is found at 32–356; it reads SIVKLLLLGA…QKNLQKAGMM (325 aa). The interval 35–48 is G1 motif; it reads KLLLLGAGECGKST. GTP-binding positions include 40-47, 177-183, 202-206, 271-274, and Ala328; these read GAGECGKS, LYSRVAT, DVGGQ, and NKKD. 2 residues coordinate Mg(2+): Ser47 and Thr183. The interval 175–183 is G2 motif; the sequence is DILYSRVAT. Residues 198–207 are G3 motif; sequence FRVFDVGGQR. Residues 267-274 form a G4 motif region; it reads ILFMNKKD. A G5 motif region spans residues 326-331; sequence TCATDT.

Belongs to the G-alpha family. G proteins are composed of 3 units; alpha, beta and gamma. The alpha chain contains the guanine nucleotide binding site. In terms of tissue distribution, expressed in sensory neurons in the head and tail. Expressed in amphid AWC neurons, to a lesser extent in AWB and weakly in AWA, ASH and ADF neurons (head sensory neurons). Expressed in phasmid PHA and PHB neurons (tail sensory neurons).

It localises to the cell projection. Its subcellular location is the cilium. The protein localises to the dendrite. In terms of biological role, guanine nucleotide-binding proteins (G proteins) are involved as modulators or transducers in various transmembrane signaling systems. This specific G-alpha subunit plays an important role in olfaction and in cilia morphogenesis. Involved in chemotactic responses to attractants diacetyl, pyrazine, 2,4,5-trimethylthiazole, benzaldehyde, isoamyl alcohol, butanone and 2,3-pentanedione. Displays a redundant function with gpa-3 in chemotactic responses. Plays a role in the avoidance response to the noxious chemical quinine in ASH sensory neurons. Involved in avoidance responses to copper, sodium dodecyl sulfate and linoleic acid. Involved in osmotic avoidance and mechanosensory responses. Involved in specifying fan-like morphology of cilia of head sensory neurons AWC. Plays a role in the detection of preferred food sources by mediating the recognition of food odors in olfactory sensory neurons. This chain is Guanine nucleotide-binding protein alpha-17 subunit, found in Caenorhabditis elegans.